The following is a 231-amino-acid chain: Putative transglycosylase H16_A0665 (231 aa).

The chain crosses the membrane as a helical span at residues 8 to 28; it reads FIKLLVLAVIGGALLAAIAIL.

The protein belongs to the glycosyltransferase 51 family.

It localises to the secreted. The protein resides in the membrane. The protein operates within cell wall biogenesis; peptidoglycan biosynthesis. In terms of biological role, cell wall formation. This chain is Putative transglycosylase H16_A0665, found in Cupriavidus necator (strain ATCC 17699 / DSM 428 / KCTC 22496 / NCIMB 10442 / H16 / Stanier 337) (Ralstonia eutropha).